The sequence spans 123 residues: Pre-B lymphocyte protein 3 (123 aa).

Residues 1 to 20 form the signal peptide; the sequence is MACRCLSFLLMGTFLSVSQT. Positions 21–123 constitute an Ig-like domain; it reads VLAQLDALLV…YCSVGYGFSP (103 aa). A disulfide bridge links C40 with C115.

Belongs to the immunoglobulin superfamily. As to expression, expressed in B-cell precursors. Expressed in fetal liver, bone marrow, spleen and lymph node.

Functionally, associates with the Ig-mu chain to form a molecular complex that is expressed on the surface of pre-B-cells. The polypeptide is Pre-B lymphocyte protein 3 (VPREB3) (Homo sapiens (Human)).